Reading from the N-terminus, the 853-residue chain is Aminotransferase PigE (853 aa).

503-504 is a binding site for pyridoxal 5'-phosphate; that stretch reads GT. An N6-(pyridoxal phosphate)lysine modification is found at Lys-645. A pyridoxal 5'-phosphate-binding site is contributed by Thr-680.

It belongs to the class-III pyridoxal-phosphate-dependent aminotransferase family. In terms of assembly, homodimer. The cofactor is pyridoxal 5'-phosphate.

It functions in the pathway antibiotic biosynthesis; prodigiosin biosynthesis. Its function is as follows. Involved in the biosynthesis of 2-methyl-3-n-amyl-pyrrole (MAP), one of the terminal products involved in the biosynthesis of the red antibiotic prodigiosin (Pig). Catalyzes the transamination to the aldehyde group of 3-acetyloctanal, resulting in an aminoketone, which spontaneously cyclizes to yield the dihydro form of MAP (H2MAP). The chain is Aminotransferase PigE from Serratia sp. (strain ATCC 39006) (Prodigiosinella confusarubida).